The primary structure comprises 309 residues: Homoserine kinase (309 aa).

An ATP-binding site is contributed by 91-101 (PIGSGLGSSAC).

The protein belongs to the GHMP kinase family. Homoserine kinase subfamily.

It is found in the cytoplasm. The enzyme catalyses L-homoserine + ATP = O-phospho-L-homoserine + ADP + H(+). Its pathway is amino-acid biosynthesis; L-threonine biosynthesis; L-threonine from L-aspartate: step 4/5. In terms of biological role, catalyzes the ATP-dependent phosphorylation of L-homoserine to L-homoserine phosphate. The chain is Homoserine kinase from Citrobacter koseri (strain ATCC BAA-895 / CDC 4225-83 / SGSC4696).